We begin with the raw amino-acid sequence, 72 residues long: DNA-directed RNA polymerase subunit omega (72 aa).

This sequence belongs to the RNA polymerase subunit omega family. The RNAP catalytic core consists of 2 alpha, 1 beta, 1 beta' and 1 omega subunit. When a sigma factor is associated with the core the holoenzyme is formed, which can initiate transcription.

The catalysed reaction is RNA(n) + a ribonucleoside 5'-triphosphate = RNA(n+1) + diphosphate. Promotes RNA polymerase assembly. Latches the N- and C-terminal regions of the beta' subunit thereby facilitating its interaction with the beta and alpha subunits. This Clostridium beijerinckii (strain ATCC 51743 / NCIMB 8052) (Clostridium acetobutylicum) protein is DNA-directed RNA polymerase subunit omega.